Reading from the N-terminus, the 554-residue chain is MSAQISDSIEEKRGFFTRWFMSTNHKDIGVLYLFTAGLAGLISVTLTVYMRMELQHPGVQYMCLEGMRLVADAAAECTPNAHLWNVVVTYHGILMMFFVVIPALFGGFGNYFMPLHIGAPDMAFPRLNNLSYWLYVCGVSLAIASLLSPGGSDQPGAGVGWVLYPPLSTTEAGYAMDLAIFAVHVSGATSILGAINIITTFLNMRAPGMTLFKVPLFAWAVFITAWMILLSLPVLAGGITMLLMDRNFGTQFFDPAGGGDPVLYQHILWFFGHPEVYMLILPGFGIISHVISTFARKPIFGYLPMVLAMAAIAFLGFIVWAHHMYTAGMSLTQQTYFQMATMTIAVPTGIKVFSWIATMWGGSIEFKTPMLWALAFLFTVGGVTGVVIAQGSLDRVYHDTYYIVAHFHYVMSLGALFAIFAGTYYWIGKMSGRQYPEWAGQLHFWMMFIGSNLIFFPQHFLGRQGMPRRYIDYPVEFSYWNNISSIGAYISFASFLFFIGIVFYTLFAGKPVNVPNYWNEHADTLEWTLPSPPPEHTFETLPKPEDWDRAQAHR.

A helical transmembrane segment spans residues 26–56 (KDIGVLYLFTAGLAGLISVTLTVYMRMELQH). Cysteine 63 and cysteine 77 are disulfide-bonded. Helical transmembrane passes span 81–118 (AHLW…LHIG), 127–148 (LNNL…SLLS), 175–203 (AMDL…TFLN), 215–248 (PLFA…DRNF), 260–295 (DPVL…STFA), and 301–319 (GYLP…GFIV). Residue histidine 91 participates in Fe(II)-heme a binding. Cu cation contacts are provided by histidine 273 and tyrosine 277. A cross-link (1'-histidyl-3'-tyrosine (His-Tyr)) is located at residues 273–277 (HPEVY). Histidine 322 and histidine 323 together coordinate Cu cation. 5 helical membrane passes run 331-359 (LTQQ…IATM), 367-390 (KTPM…VIAQ), 399-425 (DTYY…GTYY), 436-463 (PEWA…FLGR), and 478-508 (SYWN…TLFA). Histidine 406 is a heme a3 binding site. Histidine 408 is a Fe(II)-heme a binding site.

This sequence belongs to the heme-copper respiratory oxidase family. Cu(2+) is required as a cofactor. It depends on heme as a cofactor.

It is found in the cell inner membrane. The catalysed reaction is 4 Fe(II)-[cytochrome c] + O2 + 8 H(+)(in) = 4 Fe(III)-[cytochrome c] + 2 H2O + 4 H(+)(out). Its pathway is energy metabolism; oxidative phosphorylation. In terms of biological role, subunit I and II form the functional core of the enzyme complex. Electrons originating in cytochrome c are transferred via heme a and Cu(A) to the binuclear center formed by heme a3 and Cu(B). This cytochrome c oxidase shows proton pump activity across the membrane in addition to the electron transfer. The sequence is that of Cytochrome c oxidase subunit 1-alpha (ctaDI) from Paracoccus denitrificans.